A 231-amino-acid polypeptide reads, in one-letter code: Uracil phosphoribosyltransferase (231 aa).

38–42 provides a ligand contact to GTP; the sequence is KGLVR. Residues R87, R112, and 140 to 148 each bind 5-phospho-alpha-D-ribose 1-diphosphate; that span reads DPMIATGST. Uracil contacts are provided by residues I203 and 208–210; that span reads GDA. A 5-phospho-alpha-D-ribose 1-diphosphate-binding site is contributed by D209.

It belongs to the UPRTase family. Mg(2+) is required as a cofactor.

The enzyme catalyses UMP + diphosphate = 5-phospho-alpha-D-ribose 1-diphosphate + uracil. It functions in the pathway pyrimidine metabolism; UMP biosynthesis via salvage pathway; UMP from uracil: step 1/1. Its activity is regulated as follows. Allosterically activated by GTP. Functionally, catalyzes the conversion of uracil and 5-phospho-alpha-D-ribose 1-diphosphate (PRPP) to UMP and diphosphate. The polypeptide is Uracil phosphoribosyltransferase (Methanococcus maripaludis (strain C7 / ATCC BAA-1331)).